The sequence spans 245 residues: Orotidine 5'-phosphate decarboxylase (245 aa).

Substrate is bound by residues Asp-22, Lys-44, 71-80 (DLKFHDIPNT), Thr-131, Arg-192, Gln-201, Gly-221, and Arg-222. Lys-73 (proton donor) is an active-site residue.

The protein belongs to the OMP decarboxylase family. Type 1 subfamily. Homodimer.

The catalysed reaction is orotidine 5'-phosphate + H(+) = UMP + CO2. The protein operates within pyrimidine metabolism; UMP biosynthesis via de novo pathway; UMP from orotate: step 2/2. Catalyzes the decarboxylation of orotidine 5'-monophosphate (OMP) to uridine 5'-monophosphate (UMP). The sequence is that of Orotidine 5'-phosphate decarboxylase from Salmonella typhi.